The primary structure comprises 157 residues: Protein BeeE (157 aa).

The protein belongs to the phage portal family.

The sequence is that of Protein BeeE (beeE) from Escherichia coli (strain K12).